The sequence spans 92 residues: Small ribosomal subunit protein uS19 (92 aa).

Belongs to the universal ribosomal protein uS19 family.

Its function is as follows. Protein S19 forms a complex with S13 that binds strongly to the 16S ribosomal RNA. The polypeptide is Small ribosomal subunit protein uS19 (Bradyrhizobium diazoefficiens (strain JCM 10833 / BCRC 13528 / IAM 13628 / NBRC 14792 / USDA 110)).